A 292-amino-acid polypeptide reads, in one-letter code: Homoserine kinase (292 aa).

An ATP-binding site is contributed by 84–94 (PISRGLGSSSA).

The protein belongs to the GHMP kinase family. Homoserine kinase subfamily.

The protein localises to the cytoplasm. It catalyses the reaction L-homoserine + ATP = O-phospho-L-homoserine + ADP + H(+). The protein operates within amino-acid biosynthesis; L-threonine biosynthesis; L-threonine from L-aspartate: step 4/5. Its function is as follows. Catalyzes the ATP-dependent phosphorylation of L-homoserine to L-homoserine phosphate. The polypeptide is Homoserine kinase (Sulfurovum sp. (strain NBC37-1)).